An 841-amino-acid polypeptide reads, in one-letter code: MSVDEKPDSPMYVYESTVHCTNILLGLNDQRKKDILCDVTLIVERKEFRAHRAVLAACSEYFWQALVGQTKNDLVVSLPEEVTARGFGPLLQFAYTAKLLLSRENIREVIRCAEFLRMHNLEDSCFSFLQTQLLNSEDGLFVCRKDAACQRPHEDCENSAGEEEDEEEETMDSETAKMACPRDQMLPEPISFEAAAIPVAEKEEALLPEPDVPTDTKESSEKDALTQYPRYKKYQLACTKNVYNASSHSTSGFASTFREDNSSNSLKPGLARGQIKSEPPSEENEEESITLCLSGDEPDAKDRAGDVEMDRKQPSPAPTPTAPAGAACLERSRSVASPSCLRSLFSITKSVELSGLPSTSQQHFARSPACPFDKGITQGDLKTDYTPFTGNYGQPHVGQKEVSNFTMGSPLRGPGLEALCKQEGELDRRSVIFSSSACDQVSTSVHSYSGVSSLDKDLSEPVPKGLWVGAGQSLPSSQAYSHGGLMADHLPGRMRPNTSCPVPIKVCPRSPPLETRTRTSSSCSSYSYAEDGSGGSPCSLPLCEFSSSPCSQGARFLATEHQEPGLMGDGMYNQVRPQIKCEQSYGTNSSDESGSFSEADSESCPVQDRGQEVKLPFPVDQITDLPRNDFQMMIKMHKLTSEQLEFIHDVRRRSKNRIAAQRCRKRKLDCIQNLECEIRKLVCEKEKLLSERNQLKACMGELLDNFSCLSQEVCRDIQSPEQIQALHRYCPVLRPMDLPTASSINPAPLGAEQNIAASQCAVGENVPCCLEPGAAPPGPPWAPSNTSENCTSGRRLEGTDPGTFSERGPPLEPRSQTVTVDFCQEMTDKCTTDEQPRKDYT.

In terms of domain architecture, BTB spans 37–103; that stretch reads CDVTLIVERK…AYTAKLLLSR (67 aa). 3 disordered regions span residues 153–173, 204–226, and 246–329; these read HEDCENSAGEEEDEEEETMDS, EALLPEPDVPTDTKESSEKDALT, and SSHS…AACL. A compositionally biased stretch (acidic residues) spans 160 to 172; the sequence is AGEEEDEEEETMD. Basic and acidic residues-rich tracts occupy residues 214 to 224 and 298 to 313; these read TDTKESSEKDA and PDAKDRAGDVEMDRKQ. Serine 315 is modified (phosphoserine). Glycyl lysine isopeptide (Lys-Gly) (interchain with G-Cter in SUMO2) cross-links involve residues lysine 382 and lysine 421. Residue serine 521 is modified to Phosphoserine; by RPS6KB1. Positions 583–610 are disordered; sequence QSYGTNSSDESGSFSEADSESCPVQDRG. Positions 584–598 are enriched in polar residues; sequence SYGTNSSDESGSFSE. One can recognise a bZIP domain in the interval 646 to 709; that stretch reads FIHDVRRRSK…GELLDNFSCL (64 aa). The interval 651 to 667 is basic motif; the sequence is RRRSKNRIAAQRCRKRK. Residues 671 to 678 form a leucine-zipper region; that stretch reads IQNLECEI. Positions 777–816 are disordered; sequence PGPPWAPSNTSENCTSGRRLEGTDPGTFSERGPPLEPRSQ. Positions 821-841 match the Nuclear export signal motif; that stretch reads DFCQEMTDKCTTDEQPRKDYT.

It belongs to the bZIP family. CNC subfamily. As to quaternary structure, homodimer; disulfide-linked. Heterodimer of BACH2 and Maf-related transcription factors. Post-translationally, phosphorylation at Ser-521 downstream of the PI-3K pathway promotes nuclear export. The reversible disulfide bond may provide a mechanism to regulate the activity in oxidative stress responses. As to expression, B-cell specific.

It localises to the cytoplasm. Its subcellular location is the nucleus. In terms of biological role, transcriptional regulator that acts as a repressor or activator. Binds to Maf recognition elements (MARE). Plays an important role in coordinating transcription activation and repression by MAFK. Induces apoptosis in response to oxidative stress through repression of the antiapoptotic factor HMOX1. Positively regulates the nuclear import of actin. Is a key regulator of adaptive immunity, crucial for the maintenance of regulatory T-cell function and B-cell maturation. The polypeptide is Transcription regulator protein BACH2 (BACH2) (Homo sapiens (Human)).